The following is a 46-amino-acid chain: Diuretic hormone class 1 (46 aa).

Position 46 is an isoleucine amide (isoleucine 46).

It localises to the secreted. Its function is as follows. Regulation of fluid secretion. Stimulates primary urine secretion by Malpighian tubules and causes a dose-dependent stimulation of cAMP levels in the tubules. Has a greater effect on the transport of Na(+) then K(+) ions. In vitro, has synergistic effects with the smaller diuretic hormone DH(31) which co-occurs with it. This Diploptera punctata (Pacific beetle cockroach) protein is Diuretic hormone class 1.